Here is a 519-residue protein sequence, read N- to C-terminus: DNA-directed RNA polymerase subunit Rpo2N (519 aa).

Belongs to the RNA polymerase beta chain family. In terms of assembly, part of the RNA polymerase complex.

It is found in the cytoplasm. The catalysed reaction is RNA(n) + a ribonucleoside 5'-triphosphate = RNA(n+1) + diphosphate. DNA-dependent RNA polymerase (RNAP) catalyzes the transcription of DNA into RNA using the four ribonucleoside triphosphates as substrates. The Rpo2 subunit (Rpo2N and Rpo2C in this organism) is implicated in DNA promoter recognition and in nucleotide binding. This chain is DNA-directed RNA polymerase subunit Rpo2N, found in Methanothermobacter thermautotrophicus (strain ATCC 29096 / DSM 1053 / JCM 10044 / NBRC 100330 / Delta H) (Methanobacterium thermoautotrophicum).